Reading from the N-terminus, the 683-residue chain is Probable potassium transport system protein Kup 1 (683 aa).

Helical transmembrane passes span Gly13–Met33, Ile55–Leu75, Trp98–Pro118, Val139–Phe159, Ile168–Gly188, Ala218–Ser238, Ser251–Leu271, Leu296–Gly316, Ile345–Phe365, Gly376–Met396, Thr401–Ala421, and Phe426–Val446.

Belongs to the HAK/KUP transporter (TC 2.A.72) family.

Its subcellular location is the cell membrane. The catalysed reaction is K(+)(in) + H(+)(in) = K(+)(out) + H(+)(out). In terms of biological role, transport of potassium into the cell. Likely operates as a K(+):H(+) symporter. The sequence is that of Probable potassium transport system protein Kup 1 from Lactobacillus johnsonii (strain CNCM I-12250 / La1 / NCC 533).